Here is a 259-residue protein sequence, read N- to C-terminus: Global transcriptional regulator CodY (259 aa).

The tract at residues 1 to 155 (MELLAKTRKL…SSTVVGMEIL (155 aa)) is GAF domain. Residues 203-222 (ASKIADRVGITRSVIVNALR) constitute a DNA-binding region (H-T-H motif). S215 is subject to Phosphoserine.

The protein belongs to the CodY family.

It localises to the cytoplasm. DNA-binding global transcriptional regulator which is involved in the adaptive response to starvation and acts by directly or indirectly controlling the expression of numerous genes in response to nutrient availability. During rapid exponential growth, CodY is highly active and represses genes whose products allow adaptation to nutrient depletion. This Bacillus cereus (strain B4264) protein is Global transcriptional regulator CodY.